Consider the following 725-residue polypeptide: Malate synthase G 2 (725 aa).

Acetyl-CoA is bound by residues V118, R125–Y126, S276, and R313. Residue R340 is the Proton acceptor of the active site. Glyoxylate contacts are provided by residues R340, E429, and G454–D457. Residues E429 and D457 each contribute to the Mg(2+) site. P538 lines the acetyl-CoA pocket. The residue at position 619 (C619) is a Cysteine sulfenic acid (-SOH). D633 functions as the Proton donor in the catalytic mechanism.

It belongs to the malate synthase family. GlcB subfamily. Monomer. It depends on Mg(2+) as a cofactor.

It is found in the cytoplasm. It catalyses the reaction glyoxylate + acetyl-CoA + H2O = (S)-malate + CoA + H(+). Its pathway is carbohydrate metabolism; glyoxylate cycle; (S)-malate from isocitrate: step 2/2. Involved in the glycolate utilization. Catalyzes the condensation and subsequent hydrolysis of acetyl-coenzyme A (acetyl-CoA) and glyoxylate to form malate and CoA. The protein is Malate synthase G 2 of Pseudomonas syringae pv. tomato (strain ATCC BAA-871 / DC3000).